Reading from the N-terminus, the 520-residue chain is Cyclin-L2 (520 aa).

Ala2 carries the N-acetylalanine modification. 2 cyclin-like regions span residues 83–185 (ELIQ…RVLK) and 198–282 (KIIV…KILQ). The interval 316-520 (LPGGTQVLDG…DHPGHSRHRR (205 aa)) is disordered. Residues Ser330, Ser338, Ser348, and Ser351 each carry the phosphoserine modification. The segment covering 357–367 (RRLEGAKKAKA) has biased composition (basic and acidic residues). Ser369 is modified (phosphoserine). Positions 376–390 (KGRESRSRSRSREQS) are enriched in basic and acidic residues. Residues 385-423 (RSREQSYSRSPSRSASPKRRKSDSGSTSGGSKSQSRSRS) form an RS region. Residues 408–436 (SGSTSGGSKSQSRSRSRSDSPPRQAPRSA) show a composition bias toward low complexity. Basic and acidic residues predominate over residues 441-454 (SEIRGSRKSKDCKY). The segment covering 456–471 (QKPHKSRSRSSSRSRS) has biased composition (basic residues). Composition is skewed to basic and acidic residues over residues 472-481 (RSRERADNPG) and 489-514 (YYRD…DHPG).

It belongs to the cyclin family. Cyclin L subfamily. In terms of assembly, interacts with CDK11A, CDK11B, CDK12, CDK13 and POLR2A, the hyperphosphorylated C-terminal domain (CTD) of RNA polymerase II. May form a ternary complex with CDK11B and casein kinase II (CKII). Interacts with pre-mRNA-splicing factors, including at least SRSF1, SRSF2 AND SRSF7/SLU7. In terms of tissue distribution, widely expressed.

It localises to the nucleus speckle. The protein resides in the nucleus. The protein localises to the nucleoplasm. Functionally, involved in pre-mRNA splicing. May induce cell death, possibly by acting on the transcription and RNA processing of apoptosis-related factors. This Homo sapiens (Human) protein is Cyclin-L2 (CCNL2).